The primary structure comprises 591 residues: MYSPKRVKLNLTNGMRKRPETEENRGELYPPTAMARNGISPYFIGKPRRKIVGDHKASEAGPPPPFPLKPKRKEPDDDPESIVIDEDDEEDEPAPQVEKREPKKTHNRPFFGEKSSLTATELETAKKEEVVKKKDPFTMRGFDFGSDEKVVKIRDKICDIVDPTGARRSDPAFIQQMHSNTLKGIEVATNPKFKQKRTANNKNRAAIGSTLGTIYPNFLTASGQEPQKSKFQIPLDRQSSSQSNHSQPIRKTLPEIPRRCSNSLVKKAMGMDTDGGGKDERMDGLRSEPTLKHFDENIISLIESEIMSVNNQIGWADVAGLEGAKKALKEIVVLPFQRPDIFTGLRAPPKGVLLFGPPGTGKTMIGRCVASQAQATFFNISASSLTSKWVGEGEKLVRALFSVARLKLPSVIFIDEIDSLLSARSESEHESSRRIKTEFLVQLDGVNTAPDERLLVLGATNRPQELDEAARRRFQKRLYIALPEPDSRTQIVENLLRGTRHEITDHNLEKIRRLTDGYSGADMRQLCTEAAMGPIREIGDQIATINKDDIRAVTVADFTEAARVVRPTVDDSQLDAYAAWDKKFGCLPPPL.

2 disordered regions span residues 1–117 (MYSP…KSSL) and 223–249 (GQEPQKSKFQIPLDRQSSSQSNHSQPI). Over residues 17–26 (KRPETEENRG) the composition is skewed to basic and acidic residues. Positions 76–93 (DDDPESIVIDEDDEEDEP) are enriched in acidic residues. The segment covering 237–249 (RQSSSQSNHSQPI) has biased composition (polar residues). ATP-binding positions include Ala319 and 359 to 364 (GTGKTM).

The protein belongs to the AAA ATPase family. Hexamer. It depends on Mg(2+) as a cofactor.

Its subcellular location is the nucleus. It carries out the reaction ATP + H2O = ADP + phosphate + H(+). Its function is as follows. Has a role in spindle assembly which acts in the progression through mitosis during embryogenesis. Required for fertility. The protein is Fidgetin-like protein 1 (figl-1) of Caenorhabditis briggsae.